Consider the following 442-residue polypeptide: Decapping and exoribonuclease protein 1 (442 aa).

Residues 31–40 are compositionally biased toward basic and acidic residues; the sequence is QSKLCKEKTT. Residues 31–56 are disordered; the sequence is QSKLCKEKTTSDSSSSRKPSQQRDNY. The span at 41 to 53 shows a compositional bias: low complexity; sequence SDSSSSRKPSQQR. Arg-101 is a binding site for substrate. Glu-255 lines the a divalent metal cation pocket. Glu-293 is a binding site for substrate. Residues Asp-295, Glu-306, and Leu-307 each coordinate a divalent metal cation. Residues Lys-308 and Gln-330 each coordinate substrate.

The protein belongs to the DXO/Dom3Z family. The cofactor is a divalent metal cation.

Its subcellular location is the cytoplasm. It catalyses the reaction a 5'-end NAD(+)-phospho-ribonucleoside in mRNA + H2O = a 5'-end phospho-ribonucleoside in mRNA + NAD(+) + H(+). It carries out the reaction a 5'-end (N(7)-methyl 5'-triphosphoguanosine)-ribonucleoside-ribonucleotide in mRNA + H2O = a (N(7)-methyl 5'-triphosphoguanosine)-nucleoside + a 5'-end phospho-ribonucleoside in mRNA + H(+). In terms of biological role, decapping enzyme for NAD-capped RNAs: specifically hydrolyzes the nicotinamide adenine dinucleotide (NAD) cap from a subset of RNAs by removing the entire NAD moiety from the 5'-end of an NAD-capped RNA. The NAD-cap is present at the 5'-end of some RNAs and snoRNAs. In contrast to the canonical 5'-end N7 methylguanosine (m7G) cap, the NAD cap promotes mRNA decay. Also acts as a non-canonical decapping enzyme that removes the entire cap structure of m7G capped or incompletely capped RNAs. Has decapping activity toward incomplete 5'-end m7G cap mRNAs such as unmethylated 5'-end-capped RNA (cap0), while it has no activity toward 2'-O-ribose methylated m7G cap (cap1). Also has 5'-3' exonuclease activity. The sequence is that of Decapping and exoribonuclease protein 1 (DXO1) from Saccharomyces cerevisiae (strain ATCC 204508 / S288c) (Baker's yeast).